The chain runs to 160 residues: Sperm acrosome-associated protein 5 (160 aa).

The signal sequence occupies residues methionine 1 to alanine 21. The 129-residue stretch at lysine 22–arginine 150 folds into the C-type lysozyme domain. Cystine bridges form between cysteine 27-cysteine 147, cysteine 51-cysteine 135, cysteine 85-cysteine 100, and cysteine 96-cysteine 114. Residue glutamate 56 is part of the active site.

It belongs to the glycosyl hydrolase 22 family.

The protein resides in the secreted. The catalysed reaction is Hydrolysis of (1-&gt;4)-beta-linkages between N-acetylmuramic acid and N-acetyl-D-glucosamine residues in a peptidoglycan and between N-acetyl-D-glucosamine residues in chitodextrins.. The sequence is that of Sperm acrosome-associated protein 5 (Spaca5) from Mus musculus (Mouse).